The sequence spans 1207 residues: DNA-directed RNA polymerase subunit beta (1207 aa).

It belongs to the RNA polymerase beta chain family. The RNAP catalytic core consists of 2 alpha, 1 beta, 1 beta' and 1 omega subunit. When a sigma factor is associated with the core the holoenzyme is formed, which can initiate transcription.

It catalyses the reaction RNA(n) + a ribonucleoside 5'-triphosphate = RNA(n+1) + diphosphate. In terms of biological role, DNA-dependent RNA polymerase catalyzes the transcription of DNA into RNA using the four ribonucleoside triphosphates as substrates. In Enterococcus faecalis (strain ATCC 700802 / V583), this protein is DNA-directed RNA polymerase subunit beta.